A 189-amino-acid polypeptide reads, in one-letter code: Interferon alpha-4 (189 aa).

The N-terminal stretch at 1–23 (MALSFSLLMAVLVLSYKSICSLG) is a signal peptide. Disulfide bonds link Cys24–Cys122 and Cys52–Cys162.

It belongs to the alpha/beta interferon family.

It localises to the secreted. Functionally, produced by macrophages, IFN-alpha have antiviral activities. Interferon stimulates the production of two enzymes: a protein kinase and an oligoadenylate synthetase. The chain is Interferon alpha-4 (IFNA4) from Homo sapiens (Human).